The chain runs to 213 residues: RNA pyrophosphohydrolase (213 aa).

One can recognise a Nudix hydrolase domain in the interval 6 to 149 (GFRPNVGIVL…KRGVYEIALT (144 aa)). The Nudix box signature appears at 38-59 (GGIDRGETPEQAMIRELHEEVG). The interval 185–213 (NFELPPGGSFEPNPQTSYGLDASGKPHET) is disordered.

It belongs to the Nudix hydrolase family. RppH subfamily. A divalent metal cation is required as a cofactor.

In terms of biological role, accelerates the degradation of transcripts by removing pyrophosphate from the 5'-end of triphosphorylated RNA, leading to a more labile monophosphorylated state that can stimulate subsequent ribonuclease cleavage. This chain is RNA pyrophosphohydrolase, found in Albidiferax ferrireducens (strain ATCC BAA-621 / DSM 15236 / T118) (Rhodoferax ferrireducens).